Here is a 450-residue protein sequence, read N- to C-terminus: Sensor histidine kinase EnvZ (450 aa).

Topologically, residues 1–15 are cytoplasmic; it reads MRRLRFSPRSSFART. A helical transmembrane segment spans residues 16 to 35; it reads LLLIVTLLFASLVTTYLVVL. Residues 36–158 lie on the Periplasmic side of the membrane; it reads NFAILPSLQQ…LTEIHQGDFS (123 aa). A polyP-periplasmic motif motif is present at residues 71–75; the sequence is VVPPA. The helical transmembrane segment at 159-179 threads the bilayer; that stretch reads PLFRYTLAIMLLAIGGAWLFI. The region spanning 180–232 is the HAMP domain; sequence RIQNRPLVDLEHAALQVGKGIIPPPLREYGASEVRSVTRAFNHMAAGVKQLAD. The Cytoplasmic portion of the chain corresponds to 180 to 450; the sequence is RIQNRPLVDL…TRAQGTTKEG (271 aa). The polyP-cytoplasmic motif signature appears at 201 to 205; the sequence is IPPPL. Positions 223–289 are cytoplasmic dimerization domain (CDD), when dimerized forms osmosensitive core; that stretch reads MAAGVKQLAD…IIEQFIDYLR (67 aa). The Histidine kinase domain occupies 240 to 440; the sequence is GVSHDLRTPL…SIRAWLPVPV (201 aa). ATP is bound by residues H243, 347–351, D373, 392–393, and 402–406; these read NAARY, RG, and TGLGL. H243 carries the post-translational modification Phosphohistidine; by autocatalysis.

As to quaternary structure, homodimer. Interacts with MzrA. Post-translationally, autophosphorylated. Incubation of isolated EnvZ C-terminal fragment (residues 180-450) with increasing levels of NaCl or sucrose increases its autophosphorylation.

Its subcellular location is the cell inner membrane. It catalyses the reaction ATP + protein L-histidine = ADP + protein N-phospho-L-histidine.. With respect to regulation, activity is modulated by MzrA. In the presence of 0.2 M NaCl, 2.0 mM sodium cholate (bile salts) decreases expression from the ompC promoter; how this is mediated is unknown. Autophosphorylation is inhibited by the angucycline antibiotic waldiomycin in a non-competitive manner; waldiomycin prevents dimerization of the cytoplasmic domain and autophosphorylation. Functionally, member of the two-component regulatory system EnvZ/OmpR involved in osmoregulation (particularly of genes ompF and ompC) as well as other genes. EnvZ functions as a membrane-associated protein kinase that phosphorylates OmpR in response to environmental signals; at low osmolarity OmpR activates ompF transcription, while at high osmolarity it represses ompF and activates ompC transcription. Also dephosphorylates OmpR in the presence of ATP. The cytoplasmic dimerization domain (CDD) forms an osmosensitive core; increasing osmolarity stabilizes this segment (possibly by its contraction), enhancing the autophosphorylation rate and consequently, downstream phosphotransfer to OmpR and signaling. Autophosphorylation is greater when full-length EnvZ is reconstituted in a lipid environment, lipid-mediated allostery impacts the kinase function of EnvZ. Involved in acid stress response; this requires EnvZ but not OmpR phosphorylation, and suggests that EnvZ senses cytoplasmic acidic pH. This Escherichia coli (strain K12) protein is Sensor histidine kinase EnvZ (envZ).